The chain runs to 140 residues: PDZ domain-containing protein 11 (140 aa).

A PDZ domain is found at 47 to 129 (TITLKKPPGA…ISMRVRFFPY (83 aa)).

Interacts with ATP2B1, ATP2B2, ATP2B3, ATP2B4 and ATP7A. Interacts with PLEKHA7 (via WW domains) at zonula adherens; this interaction is essential for the interaction between PLEKHA7 and the ADAM10-binding protein TSPAN33. Interacts with SLC5A6. Widely expressed (at protein level).

The protein resides in the secreted. It localises to the cytoplasm. Its subcellular location is the cell junction. It is found in the adherens junction. The protein localises to the cell membrane. Functionally, mediates docking of ADAM10 to zonula adherens by interacting with PLEKHA7 which is required for PLEKHA7 to interact with the ADAM10-binding protein TSPAN33. The protein is PDZ domain-containing protein 11 (PDZD11) of Homo sapiens (Human).